The sequence spans 513 residues: MDEFHRCGKEDSFWQQCFLYPLFFQEDLYAISHDHYLDVSSSSRPMEHLSSNDQLSFLTVKRLIGQIRQQNHSIVLFVNCDPNPLADRKKSFYSESVLEALTLVLEVPFSIWSKSSVEGMNECKSFRSIHSIFPFLEDKFPHSNSILDARIPYSIHPEILVRTFRRWIRDAPSLHPLRSVLYDYRNSPENLQRSIIVVPRVNTRFFLFLLNYYVCECESILFSRLKRSSHSRSLSHGSFPQRTHFHRKIKHIIIFSRRNSLKSIWSLKDPKIHYVRYGERPIIAIKGDDLLVKKCRYYLLIFRQFYFHLWSEPYRVCSHQLSKNCSSSPGYFLRVRMNPLLVPTKTLDDFFIPILITNEMDPIVPIVPIIGLLATEKFCDISGRPISKLSWTSLTDDDILDRFDQIWRNLFHYYSGSFDRDGLYRIKYILLLSCAKTLACKHKSTIRVVRKELGPELFKKSFSKEREFDSLPFSSKAASQRERIWHSDIPQINPLANSWQKIQDLKIENLFDQ.

Belongs to the intron maturase 2 family. MatK subfamily.

Its subcellular location is the plastid. The protein resides in the chloroplast. Its function is as follows. Usually encoded in the trnK tRNA gene intron. Probably assists in splicing its own and other chloroplast group II introns. The sequence is that of Maturase K from Pinus resinosa (Red pine).